Here is a 533-residue protein sequence, read N- to C-terminus: T-complex protein 1 subunit delta (533 aa).

Positions 1-26 (MSAPAAAPAKVLPSRSDFDEKEKEKD) are disordered. A compositionally biased stretch (basic and acidic residues) spans 16 to 26 (SDFDEKEKEKD).

The protein belongs to the TCP-1 chaperonin family. As to quaternary structure, heterooligomeric complex of about 850 to 900 kDa that forms two stacked rings, 12 to 16 nm in diameter.

The protein localises to the cytoplasm. Functionally, molecular chaperone; assists the folding of proteins upon ATP hydrolysis. Known to play a role, in vitro, in the folding of actin and tubulin. The polypeptide is T-complex protein 1 subunit delta (cct4) (Dictyostelium discoideum (Social amoeba)).